The following is a 363-amino-acid chain: S-adenosylmethionine:tRNA ribosyltransferase-isomerase (363 aa).

This sequence belongs to the QueA family. As to quaternary structure, monomer.

The protein resides in the cytoplasm. It catalyses the reaction 7-aminomethyl-7-carbaguanosine(34) in tRNA + S-adenosyl-L-methionine = epoxyqueuosine(34) in tRNA + adenine + L-methionine + 2 H(+). It functions in the pathway tRNA modification; tRNA-queuosine biosynthesis. Functionally, transfers and isomerizes the ribose moiety from AdoMet to the 7-aminomethyl group of 7-deazaguanine (preQ1-tRNA) to give epoxyqueuosine (oQ-tRNA). This chain is S-adenosylmethionine:tRNA ribosyltransferase-isomerase, found in Synechococcus sp. (strain RCC307).